The chain runs to 176 residues: MNRAAIRIIGIDPGLRNMGWGVIEASGSRLSFIACGSVHSQAGSSLAERLCALHEGLLGVIADLSPMEAAVEETFVNCDPQSALKLGQARGVALVAPALAGLPVAEYAANLIKKTVVGNGHAEKAQIAMMVKFLLPMSEAKSADAADALAVAITHAQLRASRALLKSVSSMSVQTR.

Catalysis depends on residues aspartate 12, glutamate 72, and aspartate 144. 3 residues coordinate Mg(2+): aspartate 12, glutamate 72, and aspartate 144.

This sequence belongs to the RuvC family. Homodimer which binds Holliday junction (HJ) DNA. The HJ becomes 2-fold symmetrical on binding to RuvC with unstacked arms; it has a different conformation from HJ DNA in complex with RuvA. In the full resolvosome a probable DNA-RuvA(4)-RuvB(12)-RuvC(2) complex forms which resolves the HJ. Requires Mg(2+) as cofactor.

It localises to the cytoplasm. The catalysed reaction is Endonucleolytic cleavage at a junction such as a reciprocal single-stranded crossover between two homologous DNA duplexes (Holliday junction).. In terms of biological role, the RuvA-RuvB-RuvC complex processes Holliday junction (HJ) DNA during genetic recombination and DNA repair. Endonuclease that resolves HJ intermediates. Cleaves cruciform DNA by making single-stranded nicks across the HJ at symmetrical positions within the homologous arms, yielding a 5'-phosphate and a 3'-hydroxyl group; requires a central core of homology in the junction. The consensus cleavage sequence is 5'-(A/T)TT(C/G)-3'. Cleavage occurs on the 3'-side of the TT dinucleotide at the point of strand exchange. HJ branch migration catalyzed by RuvA-RuvB allows RuvC to scan DNA until it finds its consensus sequence, where it cleaves and resolves the cruciform DNA. This chain is Crossover junction endodeoxyribonuclease RuvC, found in Methylocella silvestris (strain DSM 15510 / CIP 108128 / LMG 27833 / NCIMB 13906 / BL2).